Consider the following 287-residue polypeptide: Orotidine 5'-phosphate decarboxylase (287 aa).

Lys99 functions as the Proton donor in the catalytic mechanism.

It belongs to the OMP decarboxylase family. Type 2 subfamily.

It carries out the reaction orotidine 5'-phosphate + H(+) = UMP + CO2. It participates in pyrimidine metabolism; UMP biosynthesis via de novo pathway; UMP from orotate: step 2/2. The sequence is that of Orotidine 5'-phosphate decarboxylase from Clostridium novyi (strain NT).